A 561-amino-acid polypeptide reads, in one-letter code: MMRLTLKSKVLLLAMVPVLLFALVLSGGAVLILKKQADAEVKDTRERLLGDRRAELEHYVQIAMGSIQAEYDRSANGDLNARAEAIARLSKIKYGKDGYIFGYDSQVVRLFRGDSPVDVGKSFRDRRDPSGVYLNRELVEAGRNGSHYVTYTSPLPGNESVMVPKLSYTLYLPKWDMVIGSAINLDGVEAQLVEIKQDIDERIGTLIASIVGIAGVLLVVLLVIGLAVANAMLRPLHQIRQNLDDIAAGEGDLTRRLPVTSYDELGELAGSFNRFVEKIHGLVRQIAGMTGDLKQLVEQMSAQAERSEQAMERQRHETDQVATAINEMSAAAHEVAQSAQRAAEAAQQTDHEGQAAKRVVDGSIERIHALVDEIRDSGTSLDSLQQDVQSIVSVLGVIRSIAEQTNLLALNAAIEAARAGEAGRGFAVVADEVRALASRTQQSTQEIQGMIDRLQQGTNAAVDAMRRSGEAGEGTSNQANQAGDSLDAIAQLIATINAMNAQIASAAEEQTAVAEEINRSVHQIAGAVDSVADEAQQGAQTARSLAQLGQGLGRLVGQFRI.

Over 1–11 (MMRLTLKSKVL) the chain is Cytoplasmic. The helical transmembrane segment at 12–32 (LLAMVPVLLFALVLSGGAVLI) threads the bilayer. Topologically, residues 33–205 (LKKQADAEVK…KQDIDERIGT (173 aa)) are periplasmic. The chain crosses the membrane as a helical span at residues 206-226 (LIASIVGIAGVLLVVLLVIGL). At 227 to 561 (AVANAMLRPL…LGRLVGQFRI (335 aa)) the chain is on the cytoplasmic side. The 55-residue stretch at 230–284 (NAMLRPLHQIRQNLDDIAAGEGDLTRRLPVTSYDELGELAGSFNRFVEKIHGLVR) folds into the HAMP domain. Positions 289-525 (MTGDLKQLVE…EINRSVHQIA (237 aa)) constitute a Methyl-accepting transducer domain. The tract at residues 333-357 (HEVAQSAQRAAEAAQQTDHEGQAAK) is disordered. Positions 336 to 348 (AQSAQRAAEAAQQ) are enriched in low complexity.

It belongs to the methyl-accepting chemotaxis (MCP) protein family. In terms of assembly, homodimer. The ligand-binding domain (LBD) is dimeric in the presence and the absence of ligands.

It is found in the cell inner membrane. In terms of biological role, chemotactic-signal transducers respond to changes in the concentration of attractants and repellents in the environment, transduce a signal from the outside to the inside of the cell, and facilitate sensory adaptation through the variation of the level of methylation. Directly recognizes five C4-dicarboxylic acids: L-malic, citramalic, citraconic, bromosuccinic and methylsuccinic acids. Three of the identified ligands act as chemoattractants (L-malic, D,L-bromosuccinic and L-citramalic acids) whereas two of them (L-methylsuccinic and citraconic acids) behave as antagonists by inhibiting the downstream chemotaxis signaling cascade. Antagonists compete with chemoattractants, thereby decreasing the affinity for chemoattractants and the subsequent chemotactic response. Acts through the che chemosensory pathway. The protein is Methyl-accepting chemotaxis protein CtpM of Pseudomonas aeruginosa (strain ATCC 15692 / DSM 22644 / CIP 104116 / JCM 14847 / LMG 12228 / 1C / PRS 101 / PAO1).